A 182-amino-acid polypeptide reads, in one-letter code: Large ribosomal subunit protein uL6 (182 aa).

This sequence belongs to the universal ribosomal protein uL6 family. Part of the 50S ribosomal subunit.

Its function is as follows. This protein binds to the 23S rRNA, and is important in its secondary structure. It is located near the subunit interface in the base of the L7/L12 stalk, and near the tRNA binding site of the peptidyltransferase center. In Nostoc sp. (strain PCC 7120 / SAG 25.82 / UTEX 2576), this protein is Large ribosomal subunit protein uL6.